Consider the following 455-residue polypeptide: Golgi pH regulator (455 aa).

Helical transmembrane passes span 46-66 (ITFA…LGAL), 79-99 (LYVI…YFVV), 111-131 (LFAC…GDPF), and 150-170 (VGVI…VNCP). Residues Asn-180 and Asn-243 are each glycosylated (N-linked (GlcNAc...) asparagine). 4 consecutive transmembrane segments (helical) span residues 290 to 310 (GYFF…NIVF), 343 to 363 (ISFI…LITL), 378 to 398 (VIVL…VLLM), and 425 to 445 (WFDV…YLAH).

The protein belongs to the Golgi pH regulator (TC 1.A.38) family. As to quaternary structure, homotrimer.

The protein resides in the golgi apparatus membrane. It catalyses the reaction iodide(out) = iodide(in). It carries out the reaction chloride(in) = chloride(out). The enzyme catalyses bromide(in) = bromide(out). The catalysed reaction is fluoride(in) = fluoride(out). In terms of biological role, voltage-gated channel that enables the transfer of anions such as iodide, chloride, bromide and fluoride which may function in counter-ion conductance and participates in Golgi acidification. This Salmo salar (Atlantic salmon) protein is Golgi pH regulator.